Consider the following 929-residue polypeptide: Protein unc-45 homolog A (929 aa).

TPR repeat units follow at residues 6-39 (VEQLRKEGNELFKCGDYGGALAAYTQALGLDATP), 43-76 (AVLHRNRAACYLKLEDYDKAETEASKAIEKDGGD), and 77-110 (VKALYRRSQALEKLGRLDQAVLDLQRCVSLEPKN). Lys55 carries the N6-acetyllysine modification. Lys468 is subject to N6-acetyllysine.

Interacts with PGR isoforms A and B as well as with NR3C1 in the absence of ligand, and with HSP90AB1. Binding to HSP90AB1 involves 2 UNC45A monomers per HSP90AB1 dimer.

The protein localises to the cytoplasm. Its subcellular location is the perinuclear region. It is found in the nucleus. Its function is as follows. May act as co-chaperone for HSP90 (Potential). Prevents the stimulation of HSP90AB1 ATPase activity by AHSA1. Positive factor in promoting PGR function in the cell. May be necessary for proper folding of myosin (Potential). Necessary for normal cell proliferation. Necessary for normal myotube formation and myosin accumulation during muscle cell development. May play a role in erythropoiesis in stroma cells in the spleen. This chain is Protein unc-45 homolog A (UNC45A), found in Pongo abelii (Sumatran orangutan).